The following is a 309-amino-acid chain: Dihydroorotate dehydrogenase B (NAD(+)), catalytic subunit (309 aa).

Residues Ser21 and 45–46 (KA) contribute to the FMN site. Residues Lys45 and 69-73 (NAIGL) each bind substrate. FMN-binding residues include Asn99 and Asn127. Asn127 provides a ligand contact to substrate. Residue Cys130 is the Nucleophile of the active site. FMN is bound by residues Lys165 and Ile191. Substrate is bound at residue 192-193 (NT). Residues Gly217, 243–244 (GG), and 265–266 (GT) each bind FMN.

This sequence belongs to the dihydroorotate dehydrogenase family. Type 1 subfamily. In terms of assembly, heterotetramer of 2 PyrK and 2 PyrD type B subunits. It depends on FMN as a cofactor.

It localises to the cytoplasm. The enzyme catalyses (S)-dihydroorotate + NAD(+) = orotate + NADH + H(+). It participates in pyrimidine metabolism; UMP biosynthesis via de novo pathway; orotate from (S)-dihydroorotate (NAD(+) route): step 1/1. In terms of biological role, catalyzes the conversion of dihydroorotate to orotate with NAD(+) as electron acceptor. The polypeptide is Dihydroorotate dehydrogenase B (NAD(+)), catalytic subunit (pyrD) (Bacillus cytotoxicus (strain DSM 22905 / CIP 110041 / 391-98 / NVH 391-98)).